Reading from the N-terminus, the 86-residue chain is Haditoxin (86 aa).

A signal peptide spans 1 to 21 (MKTLLLTLVVVTIVYLDLGYT). 4 cysteine pairs are disulfide-bonded: cysteine 24–cysteine 45, cysteine 38–cysteine 62, cysteine 66–cysteine 78, and cysteine 79–cysteine 84.

It belongs to the three-finger toxin family. Short-chain subfamily. Orphan group VIII (haditoxin) sub-subfamily. As to quaternary structure, homodimer; non-covalently linked. In terms of tissue distribution, expressed by the venom gland.

The protein localises to the secreted. Its function is as follows. Antagonist of muscle (alpha-1-beta-1-delta-epsilon/CHRNA1-CHRNB1-CHRND-CHRNE) and neuronal (alpha-7/CHRNA7, alpha-3-beta-2/CHRNA3-CHRNB2, alpha-4-beta-2/CHRNA4-CHRNB2) nicotinic acetylcholine receptors (nAChR). The highest affinity is for human alpha-7/CHRNA7 nAChRs (IC(50)=180 nM), compared to human alpha-1-beta-1-delta-epsilon/CHRNA1-CHRNB1-CHRND-CHRNE nAChR (IC(50)= 550 nM), alpha-3-beta-2/CHRNA3-CHRNB2 nAChR (IC(50)=500 nM), and alpha-4-beta-2/CHRNA4-CHRNB2 nAChR (IC(50)=2.6 uM). The sequence is that of Haditoxin from Ophiophagus hannah (King cobra).